The primary structure comprises 94 residues: Small ribosomal subunit protein uS19c (94 aa).

It belongs to the universal ribosomal protein uS19 family.

Its subcellular location is the plastid. The protein localises to the chloroplast. Protein S19 forms a complex with S13 that binds strongly to the 16S ribosomal RNA. The protein is Small ribosomal subunit protein uS19c of Cyanidioschyzon merolae (strain NIES-3377 / 10D) (Unicellular red alga).